The chain runs to 262 residues: ELL-associated factor 2 (262 aa).

The necessary for interaction with ELL stretch occupies residues 17-104; the sequence is LKLGESFEKQ…TGECRLEKLS (88 aa). Over residues 124–144 the composition is skewed to polar residues; that stretch reads LEQQQQQMWNPPRTSNLVQHS. Disordered stretches follow at residues 124–154 and 170–232; these read LEQQQQQMWNPPRTSNLVQHSPSEDKLSPTS and MDQM…ADTT. A phosphoserine mark is found at serine 146, serine 151, and serine 154. Low complexity predominate over residues 174–192; the sequence is SSCDSSSDSRSSSSSSSED. The tract at residues 177-262 is necessary for transactivation activity; that stretch reads DSSSDSRSSS…LSESDSDSED (86 aa). Positions 248-262 are necessary for interaction with TCEA1 and transactivation activity; that stretch reads RSDLQLSESDSDSED.

This sequence belongs to the EAF family. In terms of assembly, component of the super elongation complex (SEC), at least composed of EAF1, EAF2, CDK9, MLLT3/AF9, AFF (AFF1 or AFF4), the P-TEFb complex and ELL (ELL, ELL2 or ELL3). Interacts with ELL, ELL2 and TCEA1.

Its subcellular location is the nucleus speckle. Functionally, acts as a transcriptional transactivator of ELL, ELL2 and TCEA1 elongation activities. Potent inducer of apoptosis in prostatic and non-prostatic cell lines. In Rattus norvegicus (Rat), this protein is ELL-associated factor 2 (Eaf2).